A 156-amino-acid polypeptide reads, in one-letter code: UPF0266 membrane protein NT01EI_1718 (156 aa).

Transmembrane regions (helical) follow at residues 6 to 26 (IALL…EAIM), 46 to 63 (DSLI…RNIS), and 67 to 87 (APFT…IFYL).

This sequence belongs to the UPF0266 family.

The protein localises to the cell inner membrane. This is UPF0266 membrane protein NT01EI_1718 from Edwardsiella ictaluri (strain 93-146).